Consider the following 410-residue polypeptide: UDP-N-acetylglucosamine--N-acetylmuramyl-(pentapeptide) pyrophosphoryl-undecaprenol N-acetylglucosamine transferase (410 aa).

Residues 1-34 (MKDTVSQPAGGRGATAPRPADAASPSCGSSPSAD) are disordered. Residues 14–34 (ATAPRPADAASPSCGSSPSAD) are compositionally biased toward low complexity. Residues 45–47 (TAG), asparagine 167, arginine 204, serine 238, and glutamine 334 each bind UDP-N-acetyl-alpha-D-glucosamine.

Belongs to the glycosyltransferase 28 family. MurG subfamily.

The protein localises to the cell membrane. It carries out the reaction di-trans,octa-cis-undecaprenyl diphospho-N-acetyl-alpha-D-muramoyl-L-alanyl-D-glutamyl-meso-2,6-diaminopimeloyl-D-alanyl-D-alanine + UDP-N-acetyl-alpha-D-glucosamine = di-trans,octa-cis-undecaprenyl diphospho-[N-acetyl-alpha-D-glucosaminyl-(1-&gt;4)]-N-acetyl-alpha-D-muramoyl-L-alanyl-D-glutamyl-meso-2,6-diaminopimeloyl-D-alanyl-D-alanine + UDP + H(+). The protein operates within cell wall biogenesis; peptidoglycan biosynthesis. Cell wall formation. Catalyzes the transfer of a GlcNAc subunit on undecaprenyl-pyrophosphoryl-MurNAc-pentapeptide (lipid intermediate I) to form undecaprenyl-pyrophosphoryl-MurNAc-(pentapeptide)GlcNAc (lipid intermediate II). The polypeptide is UDP-N-acetylglucosamine--N-acetylmuramyl-(pentapeptide) pyrophosphoryl-undecaprenol N-acetylglucosamine transferase (Mycobacterium bovis (strain ATCC BAA-935 / AF2122/97)).